The chain runs to 239 residues: Ion-translocating oxidoreductase complex subunit E (239 aa).

The next 5 membrane-spanning stretches (helical) occupy residues 41–61, 71–91, 95–115, 130–150, and 184–204; these read LGLG…VSLV, LPAF…LMQA, ELYQ…VILG, SFDG…LGGL, and GFLL…LIAL.

Belongs to the NqrDE/RnfAE family. As to quaternary structure, the complex is composed of six subunits: RnfA, RnfB, RnfC, RnfD, RnfE and RnfG.

Its subcellular location is the cell inner membrane. Its function is as follows. Part of a membrane-bound complex that couples electron transfer with translocation of ions across the membrane. The chain is Ion-translocating oxidoreductase complex subunit E from Pseudomonas paraeruginosa (strain DSM 24068 / PA7) (Pseudomonas aeruginosa (strain PA7)).